A 92-amino-acid polypeptide reads, in one-letter code: N(2)-fixation sustaining protein CowN (92 aa).

It belongs to the CowN family.

Is required to sustain N(2)-dependent growth in the presence of low levels of carbon monoxide (CO). Probably acts by protecting the N(2) fixation ability of the nitrogenase complex, which is inactivated in the presence of CO. The protein is N(2)-fixation sustaining protein CowN of Cereibacter sphaeroides (strain ATCC 17025 / ATH 2.4.3) (Rhodobacter sphaeroides).